Reading from the N-terminus, the 416-residue chain is Putative competence-damage inducible protein (416 aa).

It belongs to the CinA family.

The polypeptide is Putative competence-damage inducible protein (Bacillus pumilus (strain SAFR-032)).